We begin with the raw amino-acid sequence, 277 residues long: Diaminopimelate epimerase (277 aa).

2 residues coordinate substrate: N11 and N65. C74 acts as the Proton donor in catalysis. Residues 75–76 (GN), N180, and 198–199 (ER) contribute to the substrate site. The active-site Proton acceptor is C208. 209-210 (GT) contacts substrate.

It belongs to the diaminopimelate epimerase family. In terms of assembly, homodimer.

The protein localises to the cytoplasm. It carries out the reaction (2S,6S)-2,6-diaminopimelate = meso-2,6-diaminopimelate. It functions in the pathway amino-acid biosynthesis; L-lysine biosynthesis via DAP pathway; DL-2,6-diaminopimelate from LL-2,6-diaminopimelate: step 1/1. Functionally, catalyzes the stereoinversion of LL-2,6-diaminopimelate (L,L-DAP) to meso-diaminopimelate (meso-DAP), a precursor of L-lysine and an essential component of the bacterial peptidoglycan. This Gemmatimonas aurantiaca (strain DSM 14586 / JCM 11422 / NBRC 100505 / T-27) protein is Diaminopimelate epimerase.